The sequence spans 273 residues: Short-chain dehydrogenase fogB (273 aa).

Residues I16, D66, R128, Y174, K178, V207, and T209 each contribute to the NADP(+) site. Residue Y174 is the Proton donor of the active site. Residue K178 is the Lowers pKa of active site Tyr of the active site.

It belongs to the short-chain dehydrogenases/reductases (SDR) family.

Short-chain dehydrogenase; part of the gene cluster that mediates the biosynthesis of flavoglaucin and congeners (including aspergin, dihydroauroglaucin and auroglaucin), prenylated salicylaldehyde derivatives carrying a saturated or an unsaturated C-7 side chain. The PKS fogA releases the carboxylic acid (8E,10E,12E)-3,5,7-trihydroxytetradeca-8,10,12-trienoic acid as its product, as well as derivatives with one and two double bonds. FogA is indeed able to reduce the initial triketide, thus being at least partially responsible for the differently saturated heptyl side chains of flavoglaucin congeners. The oxidoreductases fogB, fogC and fogD modify the nascent polyketide in fogA-bound form and, together, fogA, fogB, fogC and fogD are necessary for the formation of the aromatic core and the cyclized PKS products are released as salicyl alcohols. In particular, fogB is responsible for oxidation of a hydroxyl group or reduction of remaining double bond(s) at the C-7 residue whereas fogD is probably involved in the reductive release of the modified PKS products. The cytochrome P450 monooxygenase fogE is then responsible for the hydroxylation at C-3 of the benzene ring. The fogE products are substrates of the prenyltransferase fogH and the prenylated benzyl alcohols are subsequently oxidized by the fogF to produce the final aryl aldehydes flavoglaucin and congeners. The short-chain dehydrogenase fogG does not seem to be involved in the biosynthesis of the prenylated salicylaldehyde derivatives. This is Short-chain dehydrogenase fogB from Aspergillus ruber (strain CBS 135680).